A 912-amino-acid chain; its full sequence is Protein translocase subunit SecA (912 aa).

Residues Q87, 105–109 (GEGKT), and D508 each bind ATP. Residues 855 to 912 (QHQDAGGYGADEEVEQMQGGNAPVPVSQVTRDEPKVGRNDPCPCGSGKKYKHCHGQLS) are disordered. Residues C896, C898, C907, and H908 each contribute to the Zn(2+) site. The span at 902–912 (KKYKHCHGQLS) shows a compositional bias: basic residues.

This sequence belongs to the SecA family. Monomer and homodimer. Part of the essential Sec protein translocation apparatus which comprises SecA, SecYEG and auxiliary proteins SecDF-YajC and YidC. It depends on Zn(2+) as a cofactor.

It is found in the cell inner membrane. Its subcellular location is the cytoplasm. It carries out the reaction ATP + H2O + cellular proteinSide 1 = ADP + phosphate + cellular proteinSide 2.. Its function is as follows. Part of the Sec protein translocase complex. Interacts with the SecYEG preprotein conducting channel. Has a central role in coupling the hydrolysis of ATP to the transfer of proteins into and across the cell membrane, serving both as a receptor for the preprotein-SecB complex and as an ATP-driven molecular motor driving the stepwise translocation of polypeptide chains across the membrane. The chain is Protein translocase subunit SecA from Xanthomonas campestris pv. campestris (strain B100).